A 421-amino-acid polypeptide reads, in one-letter code: Putative leucine-rich repeat protein R380 (421 aa).

LRR repeat units lie at residues tyrosine 48–proline 69, lysine 70–proline 85, asparagine 89–lysine 110, leucine 111–proline 129, glutamate 130–proline 150, asparagine 151–isoleucine 172, and glutamate 173–valine 191.

The polypeptide is Putative leucine-rich repeat protein R380 (Acanthamoeba polyphaga (Amoeba)).